An 84-amino-acid polypeptide reads, in one-letter code: Small ribosomal subunit protein uS15 (84 aa).

It belongs to the universal ribosomal protein uS15 family. Part of the 30S ribosomal subunit. Forms a bridge to the 50S subunit in the 70S ribosome, contacting the 23S rRNA.

In terms of biological role, one of the primary rRNA binding proteins, it binds directly to 16S rRNA where it helps nucleate assembly of the platform of the 30S subunit by binding and bridging several RNA helices of the 16S rRNA. Forms an intersubunit bridge (bridge B4) with the 23S rRNA of the 50S subunit in the ribosome. This is Small ribosomal subunit protein uS15 from Thermosipho melanesiensis (strain DSM 12029 / CIP 104789 / BI429).